Consider the following 169-residue polypeptide: Putative pre-16S rRNA nuclease (169 aa).

A compositionally biased stretch (basic and acidic residues) spans 1-19; the sequence is MTDSDHRLPDRPGEGDPGR. The interval 1-22 is disordered; it reads MTDSDHRLPDRPGEGDPGRGRR.

The protein belongs to the YqgF nuclease family.

The protein localises to the cytoplasm. Could be a nuclease involved in processing of the 5'-end of pre-16S rRNA. This Mycobacterium sp. (strain JLS) protein is Putative pre-16S rRNA nuclease.